Here is a 289-residue protein sequence, read N- to C-terminus: ATP synthase gamma chain (289 aa).

It belongs to the ATPase gamma chain family. F-type ATPases have 2 components, CF(1) - the catalytic core - and CF(0) - the membrane proton channel. CF(1) has five subunits: alpha(3), beta(3), gamma(1), delta(1), epsilon(1). CF(0) has three main subunits: a, b and c.

It localises to the cell inner membrane. Its function is as follows. Produces ATP from ADP in the presence of a proton gradient across the membrane. The gamma chain is believed to be important in regulating ATPase activity and the flow of protons through the CF(0) complex. The protein is ATP synthase gamma chain of Polynucleobacter asymbioticus (strain DSM 18221 / CIP 109841 / QLW-P1DMWA-1) (Polynucleobacter necessarius subsp. asymbioticus).